The primary structure comprises 163 residues: Nucleotide-binding protein Mvan_0997 (163 aa).

The protein belongs to the YajQ family.

Functionally, nucleotide-binding protein. The chain is Nucleotide-binding protein Mvan_0997 from Mycolicibacterium vanbaalenii (strain DSM 7251 / JCM 13017 / BCRC 16820 / KCTC 9966 / NRRL B-24157 / PYR-1) (Mycobacterium vanbaalenii).